The following is a 785-amino-acid chain: Hypha-specific G1 cyclin-related protein 1 (785 aa).

The interval 1–42 is disordered; sequence MINITKPLTPKSISQQKQQQQHPYKNISTTKSNNNPQASGSK. The span at 22 to 42 shows a compositional bias: polar residues; sequence HPYKNISTTKSNNNPQASGSK. The Cyclin N-terminal domain occupies 71-238; the sequence is DIYDIMVNLI…VLNTLEWSLN (168 aa). Disordered stretches follow at residues 408–433, 447–679, and 750–774; these read TTTT…TTPV, VSST…SKFN, and NNSG…DSPI. Composition is skewed to low complexity over residues 447 to 473 and 484 to 512; these read VSST…STTP and NYSN…NNTT. Polar residues predominate over residues 513-535; sequence ISPVDSTTINSHTKNSSQLNYQY. Over residues 579–613 the composition is skewed to low complexity; that stretch reads NSANKNSNKSNSANNNNTTTIATTTTTTTNNNNNS. Polar residues predominate over residues 621–631; sequence LSYNNYFNSPN. The segment covering 646–679 has biased composition (low complexity); the sequence is QQQQQNQGQNQQQPLQLYQGDNNNNGTNTNSKFN. A compositionally biased stretch (gly residues) spans 754 to 764; sequence NGKGNGNGGSG. Positions 765–774 are enriched in polar residues; it reads TPISENDSPI.

Belongs to the cyclin family. Interacts with CDC28.

In terms of biological role, hypha-specific G1 cyclin-related protein involved in regulation of morphogenesis and opaque cells filamentous growth, and required for both conventional and pheromone-stimulated biofilm formation. Required to maintain hyphal tip localization of actin and SPA2. Regulates the CDC28 kinase during hyphal growth. The CDC28-HGC1 complex phosphorylates and prevents RGA2 from localizing to hyphal tips, leading to localized CDC42 activation for hyphal extension. The CDC28-HGC1 complex also phosphorylates SEC2 and maintains CDC11 phosphorylation throughout hyphal growth. Moreover CDC28-HGC1 phosphorylation of EFG1 represses cell separation genes during hyphal growth. Also partially controls SEP7 phosphorylation status and subsequent septin ring dynamics. Required for virulence and especially mediates dynamic adhesion to endothelium of blood vessels during circulation. The protein is Hypha-specific G1 cyclin-related protein 1 (HGC1) of Candida albicans (strain SC5314 / ATCC MYA-2876) (Yeast).